Consider the following 440-residue polypeptide: MDQLAHHFSEHIVELNRRVAEIIAREKLSGLVIHSGQHHRQFLDDMNYPFKVNPQFKAWVPVIDNPNCWLIVNGRDKPTLVFYRPVDFWHKVSDVPDAFWTEHVDIKLLTKADRVAEFLPKDITNWAYLGEHLDVADVLGFTSRNPDAVMNYLHYHRASKTQYELECMRQANKIAVKGHQAAKNAFYNGGSEFEIQQQYLSSVGQTVNEVPYGNIVALNQNAAILHYTALEHTKPAQRLSFLLDAGANFHGYASDITRTYAFEKNSFCDLISALNAVELAIIDRIKPGVKYTDLHIETHHHIAQLLLDFNLATGDAAGLVDQGITNVFFPHGLGHMLGLQVHDMGGYLHDERGTHIPAPEAHPYLRCTRTLEANQVLTIEPGLYIIDSLLDELKQDSRKQQINWDQVAHFRPFGGIRIEDNVIVHQDRNENMTREFGLID.

Residues D244, D255, H335, E380, and E419 each contribute to the Mn(2+) site.

This sequence belongs to the peptidase M24B family. Bacterial-type prolidase subfamily. The cofactor is Mn(2+).

It catalyses the reaction Xaa-L-Pro dipeptide + H2O = an L-alpha-amino acid + L-proline. Splits dipeptides with a prolyl residue in the C-terminal position. In Shewanella denitrificans (strain OS217 / ATCC BAA-1090 / DSM 15013), this protein is Xaa-Pro dipeptidase.